A 110-amino-acid polypeptide reads, in one-letter code: Large ribosomal subunit protein uL22 (110 aa).

The protein belongs to the universal ribosomal protein uL22 family. In terms of assembly, part of the 50S ribosomal subunit.

This protein binds specifically to 23S rRNA; its binding is stimulated by other ribosomal proteins, e.g. L4, L17, and L20. It is important during the early stages of 50S assembly. It makes multiple contacts with different domains of the 23S rRNA in the assembled 50S subunit and ribosome. In terms of biological role, the globular domain of the protein is located near the polypeptide exit tunnel on the outside of the subunit, while an extended beta-hairpin is found that lines the wall of the exit tunnel in the center of the 70S ribosome. The protein is Large ribosomal subunit protein uL22 of Pseudoalteromonas atlantica (strain T6c / ATCC BAA-1087).